The primary structure comprises 115 residues: MNMALTLFTNTALASLLVLIAFWLPQLNTYSEKVSPYECGFDPMGSARLPFSMKFFLVAITFLLFDLEIALLLPLPWASHTDNLTTMLTMALLLISLLAASLAYEWTEKGLEWTE.

3 helical membrane-spanning segments follow: residues 4-24, 55-75, and 84-104; these read ALTL…AFWL, FFLV…LLPL, and LTTM…SLAY.

Belongs to the complex I subunit 3 family. As to quaternary structure, core subunit of respiratory chain NADH dehydrogenase (Complex I) which is composed of 45 different subunits. Interacts with TMEM186. Interacts with TMEM242.

The protein resides in the mitochondrion inner membrane. It carries out the reaction a ubiquinone + NADH + 5 H(+)(in) = a ubiquinol + NAD(+) + 4 H(+)(out). Functionally, core subunit of the mitochondrial membrane respiratory chain NADH dehydrogenase (Complex I) which catalyzes electron transfer from NADH through the respiratory chain, using ubiquinone as an electron acceptor. Essential for the catalytic activity of complex I. The chain is NADH-ubiquinone oxidoreductase chain 3 from Halichoerus grypus (Gray seal).